A 453-amino-acid chain; its full sequence is Protein FAM117A (453 aa).

The span at 1 to 25 (MAGAAAGGRGGGAWGPGRGGAGGLR) shows a compositional bias: gly residues. A disordered region spans residues 1–45 (MAGAAAGGRGGGAWGPGRGGAGGLRRGCSPPAPAGSPRAGLQPLR). 2 positions are modified to phosphoserine: Ser29 and Ser67. Residues 149 to 175 (TDHRKEISKLKQQLQRTKLSRSGKEKE) are a coiled coil. The interval 159-201 (KQQLQRTKLSRSGKEKERGSPLLGDHAVRGALRASPPSFPSGS) is disordered. Residues Ser178, Ser193, Ser201, and Ser213 each carry the phosphoserine modification. The span at 269-278 (SSPSMSLASP) shows a compositional bias: low complexity. Positions 269-320 (SSPSMSLASPQPCGLASHEEHRGAAEELASTPNDKASSPGHPAFLEDGSPSP) are disordered. Thr299 carries the post-translational modification Phosphothreonine. Ser319 and Ser327 each carry phosphoserine. Position 354 is a phosphothreonine (Thr354). Residues 406-416 (GSPLPPASPRP) are compositionally biased toward pro residues. Positions 406 to 453 (GSPLPPASPRPPPRKDPEASKASPLPFEPWQRTPPSEEPVLFQSSLMV) are disordered. Phosphoserine is present on residues Ser413 and Ser428.

This sequence belongs to the FAM117 family.

This chain is Protein FAM117A (FAM117A), found in Homo sapiens (Human).